The sequence spans 376 residues: Palmitoyl-[acyl-carrier-protein] 4-desaturase 2, chloroplastic (376 aa).

The N-terminal 33 residues, 1 to 33, are a transit peptide targeting the chloroplast; sequence MELHLALRASPLPAADPGRRPPPPRGNFATNCT. The Fe cation site is built by Glu114, Glu149, His152, Glu202, Glu235, and His238.

The protein belongs to the fatty acid desaturase type 2 family. As to quaternary structure, homodimer. Requires Fe(2+) as cofactor. Preferentially expressed in the flower labellum.

Its subcellular location is the plastid. The protein resides in the chloroplast stroma. It carries out the reaction hexadecanoyl-[ACP] + 2 reduced [2Fe-2S]-[ferredoxin] + O2 + 2 H(+) = (4Z)-hexadecenoyl-[ACP] + 2 oxidized [2Fe-2S]-[ferredoxin] + 2 H2O. It catalyses the reaction octadecanoyl-[ACP] + 2 reduced [2Fe-2S]-[ferredoxin] + O2 + 2 H(+) = (9Z)-octadecenoyl-[ACP] + 2 oxidized [2Fe-2S]-[ferredoxin] + 2 H2O. It participates in lipid metabolism; fatty acid metabolism. Its function is as follows. Converts stearoyl-ACP to oleoyl-ACP by introduction of a cis double bond between carbons 9 and 10 of the acyl chain. Converts palmitoyl-ACP to (4Z)-hexadec-4-enoyl-ACP by introduction of a cis double bond between carbons 4 and 5 of the acyl chain. Catalyzes the desaturation of saturated fatty acid 18:0 and 16:0 to generate 18:1 (delta-9) and 16:1 (delta-4) intermediates, expected to give rise to 9-alkenes and 12-alkenes, respectively. In Ophrys sphegodes (Early spider orchid), this protein is Palmitoyl-[acyl-carrier-protein] 4-desaturase 2, chloroplastic (SAD2).